Here is a 383-residue protein sequence, read N- to C-terminus: Acetylornithine deacetylase (383 aa).

Histidine 80 provides a ligand contact to Zn(2+). Residue aspartate 82 is part of the active site. Aspartate 112 provides a ligand contact to Zn(2+). Residue glutamate 144 is part of the active site. The Zn(2+) site is built by glutamate 145, glutamate 169, and histidine 355.

The protein belongs to the peptidase M20A family. ArgE subfamily. Homodimer. It depends on Zn(2+) as a cofactor. Requires Co(2+) as cofactor. Glutathione is required as a cofactor.

The protein localises to the cytoplasm. It carries out the reaction N(2)-acetyl-L-ornithine + H2O = L-ornithine + acetate. It functions in the pathway amino-acid biosynthesis; L-arginine biosynthesis; L-ornithine from N(2)-acetyl-L-ornithine (linear): step 1/1. Its function is as follows. Catalyzes the hydrolysis of the amide bond of N(2)-acetylated L-amino acids. Cleaves the acetyl group from N-acetyl-L-ornithine to form L-ornithine, an intermediate in L-arginine biosynthesis pathway, and a branchpoint in the synthesis of polyamines. This Edwardsiella ictaluri (strain 93-146) protein is Acetylornithine deacetylase.